Here is a 103-residue protein sequence, read N- to C-terminus: N(4)-acetylcytidine amidohydrolase (103 aa).

An ASCH domain is found at 6–101 (ITFFQRFQDD…QTQFYVIEFK (96 aa)). Lys-21 serves as the catalytic Proton acceptor. The active-site Nucleophile is the Thr-24. Residue Glu-74 is the Proton donor of the active site.

It belongs to the N(4)-acetylcytidine amidohydrolase family.

The catalysed reaction is N(4)-acetylcytidine + H2O = cytidine + acetate + H(+). The enzyme catalyses N(4)-acetyl-2'-deoxycytidine + H2O = 2'-deoxycytidine + acetate + H(+). It carries out the reaction N(4)-acetylcytosine + H2O = cytosine + acetate + H(+). Catalyzes the hydrolysis of N(4)-acetylcytidine (ac4C). The chain is N(4)-acetylcytidine amidohydrolase (yqfB) from Escherichia coli O127:H6 (strain E2348/69 / EPEC).